The following is a 189-amino-acid chain: Putative ankyrin repeat protein TV1425 (189 aa).

ANK repeat units follow at residues 31-60 (YNRT…KLED), 64-93 (EGST…NVNT), 97-126 (SGKT…NVND), and 130-159 (EGET…DISA).

The protein is Putative ankyrin repeat protein TV1425 of Thermoplasma volcanium (strain ATCC 51530 / DSM 4299 / JCM 9571 / NBRC 15438 / GSS1).